The sequence spans 495 residues: Putative aldehyde dehydrogenase AldA (495 aa).

NAD(+) is bound at residue 212-218 (GKGSESG). Catalysis depends on residues glutamate 256 and cysteine 290.

Belongs to the aldehyde dehydrogenase family.

The catalysed reaction is an aldehyde + NAD(+) + H2O = a carboxylate + NADH + 2 H(+). The chain is Putative aldehyde dehydrogenase AldA (aldA) from Staphylococcus aureus (strain bovine RF122 / ET3-1).